A 68-amino-acid polypeptide reads, in one-letter code: MNKRPLIEQALKRVNNRYELVHAAAKLAKDLYETGAESYVTEEGIPLKKTVISINEIAKGRAVILRKE.

It belongs to the RNA polymerase subunit omega family. As to quaternary structure, the RNAP catalytic core consists of 2 alpha, 1 beta, 1 beta' and 1 omega subunit. When a sigma factor is associated with the core the holoenzyme is formed, which can initiate transcription.

It catalyses the reaction RNA(n) + a ribonucleoside 5'-triphosphate = RNA(n+1) + diphosphate. In terms of biological role, promotes RNA polymerase assembly. Latches the N- and C-terminal regions of the beta' subunit thereby facilitating its interaction with the beta and alpha subunits. In Persephonella marina (strain DSM 14350 / EX-H1), this protein is DNA-directed RNA polymerase subunit omega.